We begin with the raw amino-acid sequence, 276 residues long: Undecaprenyl-diphosphatase (276 aa).

7 helical membrane passes run 42–62 (AVTA…IVYF), 88–108 (ALLG…GYLG), 116–136 (LRSL…IVYA), 149–169 (MRLP…VPGV), 187–207 (VAAT…AGIF), 222–242 (SLVV…AWLL), and 253–273 (FVWY…TGLV).

It belongs to the UppP family.

The protein resides in the cell membrane. The enzyme catalyses di-trans,octa-cis-undecaprenyl diphosphate + H2O = di-trans,octa-cis-undecaprenyl phosphate + phosphate + H(+). Catalyzes the dephosphorylation of undecaprenyl diphosphate (UPP). Confers resistance to bacitracin. The sequence is that of Undecaprenyl-diphosphatase from Acidothermus cellulolyticus (strain ATCC 43068 / DSM 8971 / 11B).